A 129-amino-acid chain; its full sequence is Small ribosomal subunit protein uS9 (129 aa).

It belongs to the universal ribosomal protein uS9 family.

In Helicobacter hepaticus (strain ATCC 51449 / 3B1), this protein is Small ribosomal subunit protein uS9.